Here is a 282-residue protein sequence, read N- to C-terminus: BTB/POZ domain-containing protein At3g56230 (282 aa).

Basic and acidic residues predominate over residues 40-50; sequence GSKEDRHDKSN. A disordered region spans residues 40–66; that stretch reads GSKEDRHDKSNHNSTINNGSSISSSPL. Over residues 51–64 the composition is skewed to low complexity; it reads HNSTINNGSSISSS. The 71-residue stretch at 111–181 folds into the BTB domain; it reads ADILLKPGDD…LYTGTLASDK (71 aa).

It participates in protein modification; protein ubiquitination. May act as a substrate-specific adapter of an E3 ubiquitin-protein ligase complex (CUL3-RBX1-BTB) which mediates the ubiquitination and subsequent proteasomal degradation of target proteins. The polypeptide is BTB/POZ domain-containing protein At3g56230 (Arabidopsis thaliana (Mouse-ear cress)).